Reading from the N-terminus, the 353-residue chain is Cytochrome bc1 complex Rieske iron-sulfur subunit (353 aa).

The segment at 1 to 51 (MSSQDIPEENLPAEQDRPHGAAARPADETNPFADPGLPPHEPRVQDVDERA) is disordered. Residues 40–51 (HEPRVQDVDERA) show a composition bias toward basic and acidic residues. A run of 3 helical transmembrane segments spans residues 60 to 80 (ALLF…FVAI), 99 to 119 (FALG…AVHW), and 164 to 184 (LIRN…VVLL). The Rieske domain maps to 246-336 (KAALMIIRLE…IGVNDEGYLE (91 aa)). Positions 279, 281, 298, and 301 each coordinate [2Fe-2S] cluster. Residues Cys-284 and Cys-300 are joined by a disulfide bond.

It belongs to the Rieske iron-sulfur protein family. The cytochrome bc1 complex is composed of a cytochrome b (QcrB), the Rieske iron-sulfur protein (QcrA) and a diheme cytochrome c (QcrC) subunit. [2Fe-2S] cluster serves as cofactor.

Its subcellular location is the cell membrane. Iron-sulfur subunit of the cytochrome bc1 complex, an essential component of the respiratory electron transport chain required for ATP synthesis. The bc1 complex catalyzes the oxidation of menaquinol and the reduction of cytochrome c in the respiratory chain. The bc1 complex operates through a Q-cycle mechanism that couples electron transfer to generation of the proton gradient that drives ATP synthesis. This Streptomyces coelicolor (strain ATCC BAA-471 / A3(2) / M145) protein is Cytochrome bc1 complex Rieske iron-sulfur subunit (qcrA).